The primary structure comprises 425 residues: Histidine--tRNA ligase (425 aa).

This sequence belongs to the class-II aminoacyl-tRNA synthetase family. Homodimer.

It localises to the cytoplasm. The catalysed reaction is tRNA(His) + L-histidine + ATP = L-histidyl-tRNA(His) + AMP + diphosphate + H(+). This is Histidine--tRNA ligase from Streptococcus uberis (strain ATCC BAA-854 / 0140J).